Here is a 266-residue protein sequence, read N- to C-terminus: Luciferase (266 aa).

The chain crosses the membrane as a helical span at residues 22 to 41 (GLATACCAVAVASAIAFPYI).

This sequence belongs to the fungal luciferase family.

Its subcellular location is the membrane. It carries out the reaction 3-hydroxyhispidin + O2 = (E)-caffeoylpyruvate + hnu + CO2. The enzyme catalyses 3-hydroxyhispidin + O2 = 4-[(E)-2-(3,4-dihydroxyphenyl)ethenyl]-1,7-dihydroxy-2,3,5-trioxabicyclo[2.2.2]oct-7-en-6-one. Its function is as follows. Luciferase; part of the gene cluster that mediates the fungal bioluminescence cycle. Uses the fungal luciferin 3-hydroxyhispidin as a substrate to produce an endoperoxide as a high-energy intermediate with decomposition that yields oxyluciferin (also known as caffeoylpyruvate) and light emission. The fungal bioluminescence cycle begins with the hispidin synthetase that catalyzes the formation of hispidin which is further hydroxylated by the hispidin-3-hydroxylase, yielding the fungal luciferin 3-hydroxyhispidin. The luciferase then produces an endoperoxide as a high-energy intermediate with decomposition that yields oxyluciferin and light emission. Oxyluciferin can be recycled to caffeic acid by caffeoylpyruvate hydrolase. This Armillaria ostoyae (Armillaria root rot fungus) protein is Luciferase.